The following is a 206-amino-acid chain: Holliday junction branch migration complex subunit RuvA (206 aa).

Residues 1-64 form a domain I region; sequence MIGKLKGVLD…EDMIRLYGFR (64 aa). The tract at residues 65 to 144 is domain II; the sequence is TVLEREWFRL…AFAGEAAGAI (80 aa). The flexible linker stretch occupies residues 145–154; sequence GLKQDLGEGV. The segment at 154–206 is domain III; the sequence is VAPAPVSDAVSALANLGYSRDIAANAVAAALKSAGEGADTGTLIRLGLKELAR.

This sequence belongs to the RuvA family. Homotetramer. Forms an RuvA(8)-RuvB(12)-Holliday junction (HJ) complex. HJ DNA is sandwiched between 2 RuvA tetramers; dsDNA enters through RuvA and exits via RuvB. An RuvB hexamer assembles on each DNA strand where it exits the tetramer. Each RuvB hexamer is contacted by two RuvA subunits (via domain III) on 2 adjacent RuvB subunits; this complex drives branch migration. In the full resolvosome a probable DNA-RuvA(4)-RuvB(12)-RuvC(2) complex forms which resolves the HJ.

It is found in the cytoplasm. Functionally, the RuvA-RuvB-RuvC complex processes Holliday junction (HJ) DNA during genetic recombination and DNA repair, while the RuvA-RuvB complex plays an important role in the rescue of blocked DNA replication forks via replication fork reversal (RFR). RuvA specifically binds to HJ cruciform DNA, conferring on it an open structure. The RuvB hexamer acts as an ATP-dependent pump, pulling dsDNA into and through the RuvAB complex. HJ branch migration allows RuvC to scan DNA until it finds its consensus sequence, where it cleaves and resolves the cruciform DNA. This is Holliday junction branch migration complex subunit RuvA from Chelativorans sp. (strain BNC1).